The following is a 122-amino-acid chain: Large ribosomal subunit protein uL14 (122 aa).

It belongs to the universal ribosomal protein uL14 family. Part of the 50S ribosomal subunit. Forms a cluster with proteins L3 and L19. In the 70S ribosome, L14 and L19 interact and together make contacts with the 16S rRNA in bridges B5 and B8.

In terms of biological role, binds to 23S rRNA. Forms part of two intersubunit bridges in the 70S ribosome. This Pelobacter propionicus (strain DSM 2379 / NBRC 103807 / OttBd1) protein is Large ribosomal subunit protein uL14.